The following is a 548-amino-acid chain: Alpha-1,3-mannosyl-glycoprotein 4-beta-N-acetylglucosaminyltransferase B (548 aa).

At 1 to 7 (MRLRNGT) the chain is on the cytoplasmic side. Residues 8–28 (FLTLLLFCLCAFLSLSWYAAL) form a helical; Signal-anchor for type II membrane protein membrane-spanning segment. At 29–548 (SGQKGDVVDV…LSEIFLKKAD (520 aa)) the chain is on the lumenal side. A coiled-coil region spans residues 36-83 (VDVYQREFLALRDRLHAAEQESLKRSKELNLVLDEIKRAVSERQALRD). Asn87 and Asn103 each carry an N-linked (GlcNAc...) asparagine glycan.

It belongs to the glycosyltransferase 54 family. Interacts with SLC35A3. A divalent metal cation serves as cofactor. N-glycosylated. Widely expressed. Strongly overexpressed in pancreatic cancer.

It is found in the golgi apparatus membrane. It carries out the reaction an N(4)-{beta-D-GlcNAc-(1-&gt;2)-alpha-D-Man-(1-&gt;3)-[alpha-D-Man-(1-&gt;6)]-beta-D-Man-(1-&gt;4)-beta-D-GlcNAc-(1-&gt;4)-beta-D-GlcNAc}-L-asparaginyl-[protein] + UDP-N-acetyl-alpha-D-glucosamine = an N(4)-{beta-D-GlcNAc-(1-&gt;2)-[beta-D-GlcNAc-(1-&gt;4)]-alpha-D-Man-(1-&gt;3)-[alpha-D-Man-(1-&gt;6)]-beta-D-Man-(1-&gt;4)-beta-D-GlcNAc-(1-&gt;4)-beta-D-GlcNAc}-L-asparaginyl-[protein] + UDP + H(+). It catalyses the reaction N(4)-{beta-D-GlcNAc-(1-&gt;2)-alpha-D-Man-(1-&gt;3)-[beta-D-GlcNAc-(1-&gt;2)-alpha-D-Man-(1-&gt;6)]-beta-D-Man-(1-&gt;4)-beta-D-GlcNAc-(1-&gt;4)-beta-D-GlcNAc}-L-asparaginyl-[protein] + UDP-N-acetyl-alpha-D-glucosamine = N(4)-{beta-D-GlcNAc-(1-&gt;2)-[beta-D-GlcNAc-(1-&gt;4)]-alpha-D-Man-(1-&gt;3)-[beta-D-GlcNAc-(1-&gt;2)-alpha-D-Man-(1-&gt;6)]-beta-D-Man-(1-&gt;4)-beta-D-GlcNAc-(1-&gt;4)-beta-D-GlcNAc}-L-asparaginyl-[protein] + UDP + H(+). The enzyme catalyses an N(4)-{beta-D-GlcNAc-(1-&gt;2)-alpha-D-Man-(1-&gt;3)-[beta-D-GlcNAc-(1-&gt;2)-[beta-D-GlcNAc-(1-&gt;6)]-alpha-D-Man-(1-&gt;6)]-beta-D-Man-(1-&gt;4)-beta-D-GlcNAc-(1-&gt;4)-beta-D-GlcNAc}-L-asparaginyl-[protein] + UDP-N-acetyl-alpha-D-glucosamine = an N(4)-{beta-D-GlcNAc-(1-&gt;2)-[beta-D-GlcNAc-(1-&gt;4)]-alpha-D-Man-(1-&gt;3)-[beta-D-GlcNAc-(1-&gt;2)-[beta-D-GlcNAc-(1-&gt;6)]-alpha-D-Man-(1-&gt;6)]-beta-D-Man-(1-&gt;4)-beta-D-GlcNAc-(1-&gt;4)-beta-D-GlcNAc}-L-asparaginyl-[protein] + UDP + H(+). The catalysed reaction is an N(4)-{beta-D-GlcNAc-(1-&gt;2)-alpha-D-Man-(1-&gt;3)-[beta-D-GlcNAc-(1-&gt;2)-alpha-D-Man-(1-&gt;6)]-beta-D-Man-(1-&gt;4)-beta-D-GlcNAc-(1-&gt;4)-[alpha-L-Fuc-(1-&gt;6)]-beta-D-GlcNAc}-L-asparaginyl-[protein] + UDP-N-acetyl-alpha-D-glucosamine = N(4)-{beta-D-GlcNAc-(1-&gt;2)-[beta-D-GlcNAc-(1-&gt;4)]-alpha-D-Man-(1-&gt;3)-[beta-D-GlcNAc-(1-&gt;2)-alpha-D-Man-(1-&gt;6)]-beta-D-Man-(1-&gt;4)-beta-D-GlcNAc-(1-&gt;4)-[alpha-L-Fuc-(1-&gt;6)]-beta-D-GlcNAc}-asparaginyl-[protein] + UDP + H(+). It carries out the reaction an N(4)-{beta-D-GlcNAc-(1-&gt;2)-alpha-D-Man-(1-&gt;3)-[beta-D-Gal-(1-&gt;4)-beta-D-GlcNAc-(1-&gt;2)-alpha-D-Man-(1-&gt;6)]-beta-D-Man-(1-&gt;4)-beta-D-GlcNAc-(1-&gt;4)-beta-D-GlcNAc}-L-asparaginyl-[protein] + UDP-N-acetyl-alpha-D-glucosamine = an N(4)-{beta-D-GlcNAc-(1-&gt;2)-[beta-D-GlcNAc-(1-&gt;4)]-alpha-D-Man-(1-&gt;3)-[beta-D-Gal-(1-&gt;4)-beta-D-GlcNAc-(1-&gt;2)-alpha-D-Man-(1-&gt;6)]-beta-D-Man-(1-&gt;4)-beta-D-GlcNAc-(1-&gt;4)-beta-D-GlcNAc}-L-asparaginyl-[protein] + UDP + H(+). It catalyses the reaction N(4)-{beta-D-GlcNAc-(1-&gt;2)-alpha-D-Man-(1-&gt;3)-[alpha-D-Man-(1-&gt;3)-{alpha-D-Man-(1-&gt;6)}-alpha-D-Man-(1-&gt;6)]-beta-D-Man-(1-&gt;4)-beta-D-GlcNAc-(1-&gt;4)-beta-D-GlcNAc}-asparaginyl-[protein] + UDP-N-acetyl-alpha-D-glucosamine = N(4)-{beta-D-GlcNAc-(1-&gt;2)-[beta-D-GlcNAc-(1-&gt;4)]-alpha-D-Man-(1-&gt;3)-[alpha-D-Man-(1-&gt;3)-{alpha-D-Man-(1-&gt;6)}-alpha-D-Man-(1-&gt;6)]-beta-D-Man-(1-&gt;4)-beta-D-GlcNAc-(1-&gt;4)-beta-D-GlcNAc}-asparaginyl-[protein] + UDP + H(+). The enzyme catalyses N(4)-{beta-D-GlcNAc-(1-&gt;2)-alpha-D-Man-(1-&gt;3)-beta-D-Man-(1-&gt;4)-beta-D-GlcNAc-(1-&gt;4)-beta-D-GlcNAc}-asparaginyl-[protein] + UDP-N-acetyl-alpha-D-glucosamine = N(4)-{beta-D-GlcNAc-(1-&gt;2)-[beta-D-GlcNAc-(1-&gt;4)]-alpha-D-Man-(1-&gt;3)-beta-D-Man-(1-&gt;4)-beta-D-GlcNAc-(1-&gt;4)-beta-D-GlcNAc}-asparaginyl-[protein] + UDP + H(+). Its pathway is protein modification; protein glycosylation. Functionally, glycosyltransferase that catalyzes the transfer of GlcNAc from UDP-GlcNAc to the GlcNAcbeta1-2Manalpha1-3 arm of the core structure of N-linked glycans through a beta1-4 linkage and participates in the production of tri- and tetra-antennary N-linked sugar chains. Prefers complex-type N-glycans over hybrid-types. Has lower affinities for donors or acceptors than MGAT4A, suggesting that, under physiological conditions, it is not the main contributor in N-glycan biosynthesis. The polypeptide is Alpha-1,3-mannosyl-glycoprotein 4-beta-N-acetylglucosaminyltransferase B (Homo sapiens (Human)).